The chain runs to 341 residues: Ribulose-5-phosphate reductase 1 (341 aa).

Cysteine 38, histidine 64, glutamate 65, and glutamate 144 together coordinate Zn(2+).

Belongs to the zinc-containing alcohol dehydrogenase family. As to quaternary structure, heterodimer together with TarI. Can also form a dimer of heterodimers. Zn(2+) is required as a cofactor.

It catalyses the reaction D-ribitol 5-phosphate + NADP(+) = D-ribulose 5-phosphate + NADPH + H(+). It participates in cell wall biogenesis; poly(ribitol phosphate) teichoic acid biosynthesis. In terms of biological role, catalyzes the NADPH dependent reduction of D-ribulose 5-phosphate to D-ribitol 5-phosphate. This chain is Ribulose-5-phosphate reductase 1, found in Staphylococcus aureus (strain NCTC 8325 / PS 47).